A 434-amino-acid chain; its full sequence is MDMQLLTIGINHHTAPVALRERVAFPLEQIKPALSTFKSVFLGHPAPNAPEAAILSTCNRTELYCATNDRAARDAAIRWMSDYHRIPADELAPHVYALPQSEAVRHAFRVASGLDSMVLGETQILGQMKNAVRTASEAGSLGTYLNQLFQRTFAVAKEVRGTTEIGAQSVSMAAAAVRLAQRIFEQVAQQRVLFIGAGEMIELCATHFAAQGPRELVVANRTAERGAKLAERFGGRAMPLADLPARMHEFDIIVSCTASTLPIIGLGAVERAVKARRHRPIFMVDLAVPRDIEPEVGKLKDVFLYTVDDLGAIVREGNASRQAAVAQAEAIIETRVQNFMQWLDARSIVPVIRHMHTQADALRRAEVERARKMLARGDDPDAVLDALSQALTNKLIHGPTSALNRANGADRDSLIDLMRGFYQHAPRSSDTSDR.

Residues 57-60 (TCNR), Ser-116, 121-123 (ETQ), and Gln-127 each bind substrate. Cys-58 serves as the catalytic Nucleophile. Position 196–201 (196–201 (GAGEMI)) interacts with NADP(+).

This sequence belongs to the glutamyl-tRNA reductase family. As to quaternary structure, homodimer.

The enzyme catalyses (S)-4-amino-5-oxopentanoate + tRNA(Glu) + NADP(+) = L-glutamyl-tRNA(Glu) + NADPH + H(+). It participates in porphyrin-containing compound metabolism; protoporphyrin-IX biosynthesis; 5-aminolevulinate from L-glutamyl-tRNA(Glu): step 1/2. Functionally, catalyzes the NADPH-dependent reduction of glutamyl-tRNA(Glu) to glutamate 1-semialdehyde (GSA). The sequence is that of Glutamyl-tRNA reductase from Burkholderia pseudomallei (strain 1106a).